We begin with the raw amino-acid sequence, 456 residues long: RuvB-like 1 (456 aa).

K2 participates in a covalent cross-link: Glycyl lysine isopeptide (Lys-Gly) (interchain with G-Cter in SUMO2). 70-77 contacts ATP; it reads GPPGTGKT. Residue K225 forms a Glycyl lysine isopeptide (Lys-Gly) (interchain with G-Cter in SUMO1); alternate linkage. K225 is covalently cross-linked (Glycyl lysine isopeptide (Lys-Gly) (interchain with G-Cter in SUMO2); alternate). A Glycyl lysine isopeptide (Lys-Gly) (interchain with G-Cter in SUMO2) cross-link involves residue K445. Residue K453 is modified to N6-acetyllysine.

The protein belongs to the RuvB family. As to quaternary structure, forms homohexameric rings. Can form a dodecamer with RUVBL2 made of two stacked hexameric rings; however, even though RUVBL1 and RUVBL2 are present in equimolar ratio, the oligomeric status of each hexamer is not known. Oligomerization may regulate binding to nucleic acids and conversely, binding to nucleic acids may affect the dodecameric assembly. Interaction of the complex with DHX34 results in conformational changes of the N-terminus of the RUVBL2 subunits, resulting in loss of nucleotide binding ability and ATP hydrolysis of the complex. Interacts with the transcriptional activation domain of MYC. Component of the RNA polymerase II holoenzyme complex. May also act to bridge the LEF1/TCF1-CTNNB1 complex and TBP. Component of the NuA4 histone acetyltransferase complex which contains the catalytic subunit KAT5/TIP60 and the subunits EP400, TRRAP/PAF400, BRD8/SMAP, EPC1, DMAP1/DNMAP1, RUVBL1/TIP49, RUVBL2, ING3, actin, ACTL6A/BAF53A, MORF4L1/MRG15, MORF4L2/MRGX, MRGBP, YEATS4/GAS41, VPS72/YL1 and MEAF6. The NuA4 complex interacts with MYC and the adenovirus E1A protein. RUVBL1 interacts with EP400. Component of a NuA4-related complex which contains EP400, TRRAP/PAF400, SRCAP, BRD8/SMAP, EPC1, DMAP1/DNMAP1, RUVBL1/TIP49, RUVBL2, actin, ACTL6A/BAF53A, VPS72 and YEATS4/GAS41. Component of the BAF53 complex, at least composed of ACTL6A/BAF53A, RUVBL1/TIP49, SMARCA2/BRM, and TRRAP/PAF400. Component of some MLL1/MLL complex, at least composed of the core components KMT2A/MLL1, ASH2L, HCFC1/HCF1, WDR5 and RBBP5, as well as the facultative components BACC1, CHD8, E2F6, HSP70, INO80C, KANSL1, LAS1L, MAX, MCRS1, MGA, MYST1/MOF, PELP1, PHF20, PRP31, RING2, RUVB1/TIP49A, RUVB2/TIP49B, SENP3, TAF1, TAF4, TAF6, TAF7, TAF9 and TEX10. Associates with alpha and gamma tubulins, particularly during metaphase and early anaphase. Interacts with NPAT. Component of the chromatin-remodeling INO80 complex; specifically part of a complex module associated with the helicase ATP-binding and the helicase C-terminal domain of INO80. Interacts with IGHMBP2. Interacts with OFD1. Interacts with HINT1. Component of a complex with USP49 and PSMC5. Component of a SWR1-like complex. Component of the R2TP complex composed at least of RUVBL1, RUVBL2, RPAP3 and PIHD1. Component of the PAQosome complex which is responsible for the biogenesis of several protein complexes and which consists of R2TP complex members RUVBL1, RUVBL2, RPAP3 and PIH1D1, URI complex members PFDN2, PFDN6, PDRG1, UXT and URI1 as well as ASDURF, POLR2E and DNAAF10/WDR92. Interacts with PIH1D1. Interacts with ITFG1. Interacts with WAC; WAC positively regulates MTOR activity by promoting the assembly of the TTT complex composed of TELO2, TTI1 and TTI2 and the RUVBL complex composed of RUVBL1 and RUVBL2 into the TTT-RUVBL complex which leads to the dimerization of the mTORC1 complex and its subsequent activation. The RUVBL1/RUVBL2 complex interacts with ZNHIT1 (via HIT-type zinc finger), ZNHIT3 (via HIT-type zinc finger), ZNHIT6 (via HIT-type zinc finger) and DDX59/ZNHIT5 (via HIT-type zinc finger) in the presence of ADP. Interacts with NOPCHAP1; the interaction is direct and disrupted upon ATP binding. Interacts with SMG1. Interacts with NOP2, NOP56 and NUFIP1. (Microbial infection) Interacts with Mumps L polymerase; this interaction regulates the viral transcription. Ubiquitously expressed with high expression in heart, skeletal muscle and testis.

It localises to the nucleus matrix. The protein resides in the nucleus. It is found in the nucleoplasm. Its subcellular location is the cytoplasm. The protein localises to the membrane. It localises to the cytoskeleton. The protein resides in the microtubule organizing center. It is found in the centrosome. Its subcellular location is the dynein axonemal particle. It carries out the reaction ATP + H2O = ADP + phosphate + H(+). Its function is as follows. Possesses single-stranded DNA-stimulated ATPase and ATP-dependent DNA helicase (3' to 5') activity; hexamerization is thought to be critical for ATP hydrolysis and adjacent subunits in the ring-like structure contribute to the ATPase activity. Component of the NuA4 histone acetyltransferase complex which is involved in transcriptional activation of select genes principally by acetylation of nucleosomal histones H4 and H2A. This modification may both alter nucleosome-DNA interactions and promote interaction of the modified histones with other proteins which positively regulate transcription. This complex may be required for the activation of transcriptional programs associated with oncogene and proto-oncogene mediated growth induction, tumor suppressor mediated growth arrest and replicative senescence, apoptosis, and DNA repair. The NuA4 complex ATPase and helicase activities seem to be, at least in part, contributed by the association of RUVBL1 and RUVBL2 with EP400. NuA4 may also play a direct role in DNA repair when recruited to sites of DNA damage. Component of a SWR1-like complex that specifically mediates the removal of histone H2A.Z/H2AZ1 from the nucleosome. Proposed core component of the chromatin remodeling INO80 complex which exhibits DNA- and nucleosome-activated ATPase activity and catalyzes ATP-dependent nucleosome sliding. Plays an essential role in oncogenic transformation by MYC and also modulates transcriptional activation by the LEF1/TCF1-CTNNB1 complex. Essential for cell proliferation. May be able to bind plasminogen at cell surface and enhance plasminogen activation. The polypeptide is RuvB-like 1 (Homo sapiens (Human)).